Consider the following 121-residue polypeptide: Putative iron-sulfur cluster insertion protein ErpA (121 aa).

Iron-sulfur cluster contacts are provided by C49, C113, and C115.

Belongs to the HesB/IscA family. In terms of assembly, homodimer. Requires iron-sulfur cluster as cofactor.

Functionally, required for insertion of 4Fe-4S clusters. This is Putative iron-sulfur cluster insertion protein ErpA from Verminephrobacter eiseniae (strain EF01-2).